Consider the following 242-residue polypeptide: Vacuole localized DSC protein 1 (242 aa).

Transmembrane regions (helical) follow at residues 128–148 (PYGF…PTAF) and 152–172 (LLLV…INGS).

As to quaternary structure, part of the vacuole-localized DSC E3 ligase complex composed of at least TUL1, DSC2, DSC3, UBX3, CDC48 and VLD1.

It is found in the vacuole membrane. Component of the vacuole-localized DSC E3 ubiquitin ligase complex involved in the targeting of the complex to the vacuole membrane via the AP3 pathway to ubiquinate vacuolar membrane proteins. Competes with GLD1 to determine the subcellular localizations of the DSC complex. The chain is Vacuole localized DSC protein 1 from Saccharomyces cerevisiae (strain ATCC 204508 / S288c) (Baker's yeast).